Reading from the N-terminus, the 205-residue chain is Heat shock protein beta-11 (205 aa).

One can recognise a sHSP domain in the interval V67–T180. The interval K184–N205 is disordered. The span at E192–N205 shows a compositional bias: low complexity.

The protein belongs to the small heat shock protein (HSP20) family. In terms of tissue distribution, expressed specifically in the rostral-most somites at 24 hpf. At 48 hpf, expression continues in the rostral-most somites and also in the notochord. Somite expression was restricted to the vicinity of the horizontal myoseptum. In adults, expressed in the heart.

In Danio rerio (Zebrafish), this protein is Heat shock protein beta-11 (hspb11).